We begin with the raw amino-acid sequence, 265 residues long: Small ribosomal subunit protein uS3 (265 aa).

Residues 39–111 (IREFLNENFS…EVILNIIEVR (73 aa)) enclose the KH type-2 domain. Residues 224-250 (FEAGNQRRGQKRRPRNDQPVKDLNKEK) are disordered. Residues 238–250 (RNDQPVKDLNKEK) show a composition bias toward basic and acidic residues.

The protein belongs to the universal ribosomal protein uS3 family. In terms of assembly, part of the 30S ribosomal subunit. Forms a tight complex with proteins S10 and S14.

Binds the lower part of the 30S subunit head. Binds mRNA in the 70S ribosome, positioning it for translation. This chain is Small ribosomal subunit protein uS3, found in Acholeplasma laidlawii.